A 1284-amino-acid chain; its full sequence is DNA topoisomerase 2, mitochondrial (1284 aa).

The transit peptide at 1 to 35 (MSKLLNNNNHKNLTNYLKFGKGIINNLNNKSKQVG) directs the protein to the mitochondrion. Residues Asn-183, Asn-212, 240–242 (GSN), and 253–260 (GRNGFGAK) contribute to the ATP site. The interaction with DNA stretch occupies residues 445-447 (KKK). Residue 478-480 (QSK) participates in ATP binding. The 118-residue stretch at 560 to 677 (CTLIITEGDS…NLLKRGFLVE (118 aa)) folds into the Toprim domain. Mg(2+) is bound by residues Glu-566, Asp-646, and Asp-648. The region spanning 810 to 1232 (IPSLIDGLKP…DPKSLWTADL (423 aa)) is the Topo IIA-type catalytic domain. Catalysis depends on Tyr-900, which acts as the O-(5'-phospho-DNA)-tyrosine intermediate. The disordered stretch occupies residues 1245 to 1284 (EFQKKPLKTSSSSSFDVSSSSESAKLSSTRKSKTDKIKSK). Residues 1254–1271 (SSSSSFDVSSSSESAKLS) are compositionally biased toward low complexity.

The protein belongs to the type II topoisomerase family. Homodimer. The cofactor is Mg(2+). It depends on Mn(2+) as a cofactor. Requires Ca(2+) as cofactor.

The protein localises to the mitochondrion. The enzyme catalyses ATP-dependent breakage, passage and rejoining of double-stranded DNA.. Functionally, control of topological states of DNA by transient breakage and subsequent rejoining of DNA strands. Topoisomerase II makes double-strand breaks. This Dictyostelium discoideum (Social amoeba) protein is DNA topoisomerase 2, mitochondrial (top2mt).